A 444-amino-acid chain; its full sequence is CBL-interacting serine/threonine-protein kinase 1 (444 aa).

The 256-residue stretch at 20–275 (YELGRTLGEG…VVGIKASEWF (256 aa)) folds into the Protein kinase domain. ATP contacts are provided by residues 26–34 (LGEGNFGKV) and Lys-49. Asp-143 functions as the Proton acceptor in the catalytic mechanism. Residues 161-190 (DFGLSALPQHFRDDGLLHTTCGSPNYVAPE) are activation loop. Ser-165 carries the post-translational modification Phosphoserine. Thr-179 carries the phosphothreonine modification. In terms of domain architecture, NAF spans 313–337 (DSPTIINAFQLIGMSSFLDLSGFFE). The segment at 343–372 (ERRIRFTSNSSAKDLLEKIETAVTEMGFSV) is PPI.

It belongs to the protein kinase superfamily. CAMK Ser/Thr protein kinase family. SNF1 subfamily. In terms of assembly, interacts with CBL1. Interacts with CBL2. Interacts with CBL3. Interacts with CBL9. Interacts with ECT1 and ECT2. Mn(2+) is required as a cofactor. Post-translationally, autophosphorylated. As to expression, ubiquitous.

The enzyme catalyses L-seryl-[protein] + ATP = O-phospho-L-seryl-[protein] + ADP + H(+). The catalysed reaction is L-threonyl-[protein] + ATP = O-phospho-L-threonyl-[protein] + ADP + H(+). Functionally, CIPK serine-threonine protein kinases interact with CBL proteins. Binding of a CBL protein to the regulatory NAF domain of CIPK protein lead to the activation of the kinase in a calcium-dependent manner. The sequence is that of CBL-interacting serine/threonine-protein kinase 1 (CIPK1) from Arabidopsis thaliana (Mouse-ear cress).